We begin with the raw amino-acid sequence, 998 residues long: Mediator of RNA polymerase II transcription subunit 14 (998 aa).

This sequence belongs to the Mediator complex subunit 14 family. As to quaternary structure, component of the Mediator complex.

The protein resides in the nucleus. In terms of biological role, component of the Mediator complex, a coactivator involved in the regulated transcription of nearly all RNA polymerase II-dependent genes. Mediator functions as a bridge to convey information from gene-specific regulatory proteins to the basal RNA polymerase II transcription machinery. Mediator is recruited to promoters by direct interactions with regulatory proteins and serves as a scaffold for the assembly of a functional preinitiation complex with RNA polymerase II and the general transcription factors. This chain is Mediator of RNA polymerase II transcription subunit 14 (RGR1), found in Kluyveromyces lactis (strain ATCC 8585 / CBS 2359 / DSM 70799 / NBRC 1267 / NRRL Y-1140 / WM37) (Yeast).